A 225-amino-acid chain; its full sequence is NAD(P)H-quinone oxidoreductase subunit K, chloroplastic (225 aa).

[4Fe-4S] cluster contacts are provided by Cys43, Cys44, Cys108, and Cys139.

This sequence belongs to the complex I 20 kDa subunit family. As to quaternary structure, NDH is composed of at least 16 different subunits, 5 of which are encoded in the nucleus. It depends on [4Fe-4S] cluster as a cofactor.

It is found in the plastid. The protein resides in the chloroplast thylakoid membrane. The catalysed reaction is a plastoquinone + NADH + (n+1) H(+)(in) = a plastoquinol + NAD(+) + n H(+)(out). It carries out the reaction a plastoquinone + NADPH + (n+1) H(+)(in) = a plastoquinol + NADP(+) + n H(+)(out). Functionally, NDH shuttles electrons from NAD(P)H:plastoquinone, via FMN and iron-sulfur (Fe-S) centers, to quinones in the photosynthetic chain and possibly in a chloroplast respiratory chain. The immediate electron acceptor for the enzyme in this species is believed to be plastoquinone. Couples the redox reaction to proton translocation, and thus conserves the redox energy in a proton gradient. This Gossypium barbadense (Sea Island cotton) protein is NAD(P)H-quinone oxidoreductase subunit K, chloroplastic.